Reading from the N-terminus, the 358-residue chain is DNA polymerase IV (358 aa).

The UmuC domain maps to 4 to 185 (IIHIDMDCYF…LSLRKIPGVG (182 aa)). Positions 8 and 103 each coordinate Mg(2+). Glu-104 is a catalytic residue.

The protein belongs to the DNA polymerase type-Y family. Monomer. Mg(2+) is required as a cofactor.

It localises to the cytoplasm. The enzyme catalyses DNA(n) + a 2'-deoxyribonucleoside 5'-triphosphate = DNA(n+1) + diphosphate. Its function is as follows. Poorly processive, error-prone DNA polymerase involved in untargeted mutagenesis. Copies undamaged DNA at stalled replication forks, which arise in vivo from mismatched or misaligned primer ends. These misaligned primers can be extended by PolIV. Exhibits no 3'-5' exonuclease (proofreading) activity. May be involved in translesional synthesis, in conjunction with the beta clamp from PolIII. This is DNA polymerase IV from Shewanella baltica (strain OS155 / ATCC BAA-1091).